The sequence spans 394 residues: Ornithine aminotransferase 1 (394 aa).

N6-(pyridoxal phosphate)lysine is present on lysine 252.

It belongs to the class-III pyridoxal-phosphate-dependent aminotransferase family. OAT subfamily. Pyridoxal 5'-phosphate serves as cofactor.

Its subcellular location is the cytoplasm. It catalyses the reaction a 2-oxocarboxylate + L-ornithine = L-glutamate 5-semialdehyde + an L-alpha-amino acid. Its pathway is amino-acid biosynthesis; L-proline biosynthesis; L-glutamate 5-semialdehyde from L-ornithine: step 1/1. In terms of biological role, catalyzes the interconversion of ornithine to glutamate semialdehyde. This is Ornithine aminotransferase 1 from Staphylococcus aureus (strain MRSA252).